The following is a 234-amino-acid chain: Phosphoribosylaminoimidazole-succinocarboxamide synthase (234 aa).

The protein belongs to the SAICAR synthetase family.

The catalysed reaction is 5-amino-1-(5-phospho-D-ribosyl)imidazole-4-carboxylate + L-aspartate + ATP = (2S)-2-[5-amino-1-(5-phospho-beta-D-ribosyl)imidazole-4-carboxamido]succinate + ADP + phosphate + 2 H(+). The protein operates within purine metabolism; IMP biosynthesis via de novo pathway; 5-amino-1-(5-phospho-D-ribosyl)imidazole-4-carboxamide from 5-amino-1-(5-phospho-D-ribosyl)imidazole-4-carboxylate: step 1/2. The polypeptide is Phosphoribosylaminoimidazole-succinocarboxamide synthase (Exiguobacterium sp. (strain ATCC BAA-1283 / AT1b)).